The chain runs to 159 residues: Protein-export protein SecB (159 aa).

Belongs to the SecB family. Homotetramer, a dimer of dimers. One homotetramer interacts with 1 SecA dimer.

It localises to the cytoplasm. One of the proteins required for the normal export of preproteins out of the cell cytoplasm. It is a molecular chaperone that binds to a subset of precursor proteins, maintaining them in a translocation-competent state. It also specifically binds to its receptor SecA. In Nitrosospira multiformis (strain ATCC 25196 / NCIMB 11849 / C 71), this protein is Protein-export protein SecB.